Consider the following 426-residue polypeptide: Glutamate-1-semialdehyde 2,1-aminomutase (426 aa).

Lys-265 carries the post-translational modification N6-(pyridoxal phosphate)lysine.

The protein belongs to the class-III pyridoxal-phosphate-dependent aminotransferase family. HemL subfamily. As to quaternary structure, homodimer. Pyridoxal 5'-phosphate serves as cofactor.

The protein localises to the cytoplasm. It carries out the reaction (S)-4-amino-5-oxopentanoate = 5-aminolevulinate. Its pathway is porphyrin-containing compound metabolism; protoporphyrin-IX biosynthesis; 5-aminolevulinate from L-glutamyl-tRNA(Glu): step 2/2. This chain is Glutamate-1-semialdehyde 2,1-aminomutase (hemL), found in Salmonella typhimurium (strain SL1344).